The chain runs to 628 residues: Phosphomethylpyrimidine synthase (628 aa).

Substrate contacts are provided by residues N228, M257, Y286, H322, 342–344 (SRG), 383–386 (DGLR), and E422. H426 lines the Zn(2+) pocket. Y449 contacts substrate. A Zn(2+)-binding site is contributed by H490. 3 residues coordinate [4Fe-4S] cluster: C570, C573, and C578.

It belongs to the ThiC family. As to quaternary structure, homodimer. Requires [4Fe-4S] cluster as cofactor.

The enzyme catalyses 5-amino-1-(5-phospho-beta-D-ribosyl)imidazole + S-adenosyl-L-methionine = 4-amino-2-methyl-5-(phosphooxymethyl)pyrimidine + CO + 5'-deoxyadenosine + formate + L-methionine + 3 H(+). It participates in cofactor biosynthesis; thiamine diphosphate biosynthesis. Catalyzes the synthesis of the hydroxymethylpyrimidine phosphate (HMP-P) moiety of thiamine from aminoimidazole ribotide (AIR) in a radical S-adenosyl-L-methionine (SAM)-dependent reaction. The chain is Phosphomethylpyrimidine synthase from Methylibium petroleiphilum (strain ATCC BAA-1232 / LMG 22953 / PM1).